The following is a 156-amino-acid chain: Small ribosomal subunit protein uS7 (156 aa).

This sequence belongs to the universal ribosomal protein uS7 family. In terms of assembly, part of the 30S ribosomal subunit. Contacts proteins S9 and S11.

Functionally, one of the primary rRNA binding proteins, it binds directly to 16S rRNA where it nucleates assembly of the head domain of the 30S subunit. Is located at the subunit interface close to the decoding center, probably blocks exit of the E-site tRNA. The chain is Small ribosomal subunit protein uS7 from Vibrio parahaemolyticus serotype O3:K6 (strain RIMD 2210633).